A 107-amino-acid polypeptide reads, in one-letter code: Phosphoribosyl-ATP pyrophosphatase (107 aa).

It belongs to the PRA-PH family.

The protein resides in the cytoplasm. The enzyme catalyses 1-(5-phospho-beta-D-ribosyl)-ATP + H2O = 1-(5-phospho-beta-D-ribosyl)-5'-AMP + diphosphate + H(+). Its pathway is amino-acid biosynthesis; L-histidine biosynthesis; L-histidine from 5-phospho-alpha-D-ribose 1-diphosphate: step 2/9. The polypeptide is Phosphoribosyl-ATP pyrophosphatase (Bacillus cereus (strain ATCC 14579 / DSM 31 / CCUG 7414 / JCM 2152 / NBRC 15305 / NCIMB 9373 / NCTC 2599 / NRRL B-3711)).